The following is a 241-amino-acid chain: B9 domain-containing protein 1 (241 aa).

Residues 1–42 form a disordered region; it reads MSASEGISLPGNEETTPPHEKHKQKAKKAKKKSRSAKESVPN. A compositionally biased stretch (basic residues) spans 20 to 34; that stretch reads EKHKQKAKKAKKKSR. Positions 53–197 constitute a C2 B9-type domain; the sequence is FSLSIVGQIV…TSWLLRREPE (145 aa).

The protein belongs to the B9D family. In terms of assembly, probable component of the tectonic-like complex (also named MKS complex), composed of B9d1, B9d2, Cc2d2a, Mks1 and tctn. Expressed in type I sensory neurons (at protein level). Expressed in spermatids and spermatocytes (at protein level).

It localises to the cytoplasm. It is found in the cytoskeleton. The protein localises to the cilium basal body. Functionally, probable component of the tectonic-like complex (also named MKS complex), a complex localized at the transition zone of primary cilia. Required for ciliary structure and function. The chain is B9 domain-containing protein 1 from Drosophila melanogaster (Fruit fly).